We begin with the raw amino-acid sequence, 577 residues long: Type I restriction enzyme MjaVII methylase subunit (577 aa).

Residues Glu-251 to Val-256, Ser-281 to Thr-283, Glu-306, and Asp-335 to Ser-336 each bind S-adenosyl-L-methionine.

The protein belongs to the N4/N6-methyltransferase family. As to quaternary structure, the type I restriction/modification system is composed of three polypeptides R, M and S.

The catalysed reaction is a 2'-deoxyadenosine in DNA + S-adenosyl-L-methionine = an N(6)-methyl-2'-deoxyadenosine in DNA + S-adenosyl-L-homocysteine + H(+). Its function is as follows. The subtype gamma methyltransferase (M) subunit of a type I restriction enzyme. The M and S subunits together form a methyltransferase (MTase) that methylates A-3 on the top and bottom strands of the sequence 5'-CAAN(7)TGG-3'. In the presence of the R subunit the complex can also act as an endonuclease, binding to the same target sequence but cutting the DNA some distance from this site. Whether the DNA is cut or modified depends on the methylation state of the target sequence. When the target site is unmodified, the DNA is cut. When the target site is hemimethylated, the complex acts as a maintenance MTase modifying the DNA so that both strands become methylated. After locating a non-methylated recognition site, the enzyme complex serves as a molecular motor that translocates DNA in an ATP-dependent manner until a collision occurs that triggers cleavage. This Methanocaldococcus jannaschii (strain ATCC 43067 / DSM 2661 / JAL-1 / JCM 10045 / NBRC 100440) (Methanococcus jannaschii) protein is Type I restriction enzyme MjaVII methylase subunit.